A 256-amino-acid chain; its full sequence is Pimeloyl-[acyl-carrier protein] methyl ester esterase (256 aa).

An AB hydrolase-1 domain is found at 15–242 (HLVLLHGWGL…AAHAPFISHP (228 aa)). Substrate is bound by residues W22, 82–83 (SL), and 143–147 (FLALQ). The Nucleophile role is filled by S82. Active-site residues include D207 and H235. Residue H235 participates in substrate binding.

Belongs to the AB hydrolase superfamily. Carboxylesterase BioH family. Monomer.

The protein resides in the cytoplasm. The enzyme catalyses 6-carboxyhexanoyl-[ACP] methyl ester + H2O = 6-carboxyhexanoyl-[ACP] + methanol + H(+). The protein operates within cofactor biosynthesis; biotin biosynthesis. Functionally, the physiological role of BioH is to remove the methyl group introduced by BioC when the pimeloyl moiety is complete. It allows to synthesize pimeloyl-ACP via the fatty acid synthetic pathway through the hydrolysis of the ester bonds of pimeloyl-ACP esters. In Salmonella agona (strain SL483), this protein is Pimeloyl-[acyl-carrier protein] methyl ester esterase.